A 599-amino-acid polypeptide reads, in one-letter code: Leucine zipper putative tumor suppressor 1 (599 aa).

The N-myristoyl glycine moiety is linked to residue G2. Disordered regions lie at residues 135-190 (GAIL…TTSS) and 288-324 (EFAS…KSQR). Residues 153-162 (PPDKPKEQEL) show a composition bias toward basic and acidic residues. Positions 174 to 190 (SGRNSMSSLPTHSTTSS) are enriched in polar residues. Residues 256–572 (LSTDECTIQE…LEKALQQLAR (317 aa)) adopt a coiled-coil conformation. Basic and acidic residues predominate over residues 288–313 (EFASGQTFEERPRRTRDELECLEPKS).

It belongs to the LZTS family. As to quaternary structure, binds EEF1G, TLK2 and CDK1. In terms of processing, phosphorylated on serine residues. Hyperphosphorylated by the cAMP-dependent kinase PKA during cell-cycle progression.

It is found in the cytoplasm. It localises to the cell membrane. The protein resides in the cell projection. Its subcellular location is the dendritic spine. The protein localises to the postsynaptic density. It is found in the synapse. Functionally, involved in the regulation of cell growth. May stabilize the active CDC2-cyclin B1 complex and thereby contribute to the regulation of the cell cycle and the prevention of uncontrolled cell proliferation. May act as tumor suppressor. The protein is Leucine zipper putative tumor suppressor 1 (Lzts1) of Mus musculus (Mouse).